The following is a 172-amino-acid chain: Shikimate kinase (172 aa).

An ATP-binding site is contributed by 17–22 (GTGKST). Serine 21 serves as a coordination point for Mg(2+). Substrate contacts are provided by aspartate 39, arginine 63, and glycine 84. Residue arginine 122 coordinates ATP. Arginine 140 lines the substrate pocket.

The protein belongs to the shikimate kinase family. In terms of assembly, monomer. Mg(2+) is required as a cofactor.

The protein localises to the cytoplasm. The catalysed reaction is shikimate + ATP = 3-phosphoshikimate + ADP + H(+). It functions in the pathway metabolic intermediate biosynthesis; chorismate biosynthesis; chorismate from D-erythrose 4-phosphate and phosphoenolpyruvate: step 5/7. Its function is as follows. Catalyzes the specific phosphorylation of the 3-hydroxyl group of shikimic acid using ATP as a cosubstrate. This chain is Shikimate kinase, found in Staphylococcus haemolyticus (strain JCSC1435).